The following is a 360-amino-acid chain: tRNA N6-adenosine threonylcarbamoyltransferase (360 aa).

Fe cation is bound by residues His-115 and His-119. Substrate-binding positions include 137–141 (LVSGG), Asp-170, Gly-183, and Asn-283. Asp-311 is a Fe cation binding site.

It belongs to the KAE1 / TsaD family. Fe(2+) serves as cofactor.

The protein localises to the cytoplasm. The catalysed reaction is L-threonylcarbamoyladenylate + adenosine(37) in tRNA = N(6)-L-threonylcarbamoyladenosine(37) in tRNA + AMP + H(+). Required for the formation of a threonylcarbamoyl group on adenosine at position 37 (t(6)A37) in tRNAs that read codons beginning with adenine. Is involved in the transfer of the threonylcarbamoyl moiety of threonylcarbamoyl-AMP (TC-AMP) to the N6 group of A37, together with TsaE and TsaB. TsaD likely plays a direct catalytic role in this reaction. In Sinorhizobium medicae (strain WSM419) (Ensifer medicae), this protein is tRNA N6-adenosine threonylcarbamoyltransferase.